We begin with the raw amino-acid sequence, 208 residues long: RNA chaperone ProQ (208 aa).

2 stretches are compositionally biased toward basic and acidic residues: residues 99-115 and 126-135; these read AQETLKESKAKVAEKNK and PAKDKPENTA. The interval 99-149 is disordered; sequence AQETLKESKAKVAEKNKATNKAAAKKAPAKDKPENTAKAKPKTAKKPAKPK. Residues 137–149 show a composition bias toward basic residues; it reads AKPKTAKKPAKPK.

Belongs to the ProQ family.

Its subcellular location is the cytoplasm. Functionally, RNA chaperone with significant RNA binding, RNA strand exchange and RNA duplexing activities. The protein is RNA chaperone ProQ of Idiomarina loihiensis (strain ATCC BAA-735 / DSM 15497 / L2-TR).